Here is a 253-residue protein sequence, read N- to C-terminus: Discoidin-1 subunit B/C (253 aa).

An N-acetylserine modification is found at Ser2. Residues 2–152 (STQGLVQLIS…ISLRCEFYTQ (151 aa)) enclose the F5/8 type C domain. Positions 79–81 (RGD) match the Cell attachment site motif.

As to quaternary structure, tetramer of four different chains (A to D). In terms of tissue distribution, stalk cells.

The protein localises to the cytoplasm. In terms of biological role, galactose- and N-acetylgalactosamine-binding lectin. May play a role in cell-substratum adhesion rather than in cell-cell adhesion. May be necessary for the maintenance of normal elongate morphology during aggregation. The sequence is that of Discoidin-1 subunit B/C (dscC-1) from Dictyostelium discoideum (Social amoeba).